The primary structure comprises 1320 residues: Tetratricopeptide repeat protein 21A (1320 aa).

TPR repeat units follow at residues 4-38 (NDSS…FSND), 110-143 (GTAL…SRGF), 146-180 (AYVL…TKDV), 181-213 (LGLM…SGSF), 215-247 (PALV…DESN), 334-367 (VHVA…DKDG), 502-534 (IDPL…DPAS), 572-605 (PLYH…PALK), 728-761 (PHTS…NPHD), 762-795 (ASLA…NGQD), 797-828 (LCCD…DIVQ), 837-869 (VKCL…QSRI), 889-922 (ASIC…LPTD), 924-956 (KVML…EQNH), 957-990 (ETAS…APDN), 1028-1061 (PGFN…STWG), 1201-1234 (EKSW…NKSC), 1236-1268 (KAYE…SHHA), and 1270-1303 (PAIG…HPDY).

It belongs to the TTC21 family. In terms of assembly, interacts with IFT20. Interacts with IFT52. Interacts with IFT140. Interacts with CEP78; regulating IFT20 stability and localization. Strongly expressed in testis.

Functionally, intraflagellar transport (IFT)-associated protein required for spermatogenesis. Required for sperm flagellar formation and intraflagellar transport. The chain is Tetratricopeptide repeat protein 21A from Homo sapiens (Human).